Reading from the N-terminus, the 159-residue chain is 3-hydroxyacyl-[acyl-carrier-protein] dehydratase FabZ (159 aa).

H65 is a catalytic residue.

The protein belongs to the thioester dehydratase family. FabZ subfamily.

Its subcellular location is the cytoplasm. The catalysed reaction is a (3R)-hydroxyacyl-[ACP] = a (2E)-enoyl-[ACP] + H2O. Involved in unsaturated fatty acids biosynthesis. Catalyzes the dehydration of short chain beta-hydroxyacyl-ACPs and long chain saturated and unsaturated beta-hydroxyacyl-ACPs. This is 3-hydroxyacyl-[acyl-carrier-protein] dehydratase FabZ from Microcystis aeruginosa (strain NIES-843 / IAM M-2473).